A 446-amino-acid chain; its full sequence is Glutamine synthetase (446 aa).

The 86-residue stretch at 18 to 103 (ENVRYLRLQF…LICDVYKTDG (86 aa)) folds into the GS beta-grasp domain. Residues 110–446 (PRANLKRVLK…WERDQYMKQY (337 aa)) enclose the GS catalytic domain. Mg(2+) is bound by residues glutamate 134 and glutamate 136. Glutamate 186 contributes to the ATP binding site. Mg(2+) is bound by residues glutamate 191 and glutamate 198. Residues 242–243 (NG) and glycine 243 contribute to the L-glutamate site. Residue histidine 247 participates in Mg(2+) binding. Serine 251 is an ATP binding site. The L-glutamate site is built by arginine 300, glutamate 306, and arginine 318. The ATP site is built by arginine 318 and arginine 323. Glutamate 335 lines the Mg(2+) pocket. An L-glutamate-binding site is contributed by arginine 337.

It belongs to the glutamine synthetase family. In terms of assembly, oligomer of 12 subunits arranged in the form of two hexagons. In its feedback-inhibited form, interacts with TnrA in order to block its DNA-binding activity. Mg(2+) serves as cofactor.

The protein localises to the cytoplasm. It catalyses the reaction L-glutamate + NH4(+) + ATP = L-glutamine + ADP + phosphate + H(+). With respect to regulation, inhibited by glutamine. In terms of biological role, glutamine synthetase (GS) is an unusual multitasking protein that functions as an enzyme, a transcription coregulator, and a chaperone in ammonium assimilation and in the regulation of genes involved in nitrogen metabolism. It catalyzes the ATP-dependent biosynthesis of glutamine from glutamate and ammonia. Feedback-inhibited GlnA also interacts with and regulates the activity of the transcriptional regulator TnrA. During nitrogen limitation, TnrA is in its DNA-binding active state and turns on the transcription of genes required for nitrogen assimilation. Under conditions of nitrogen excess, feedback-inhibited GlnA forms a stable complex with TnrA, which inhibits its DNA-binding activity. In contrast, feedback-inhibited GlnA acts as a chaperone to stabilize the DNA-binding activity of GlnR, which represses the transcription of nitrogen assimilation genes. The chain is Glutamine synthetase from Staphylococcus aureus (strain N315).